The following is a 529-amino-acid chain: Ectonucleoside triphosphate diphosphohydrolase 3 (529 aa).

Topologically, residues 1–22 (MFTVMTRQPCEQAGFRALSRTP) are cytoplasmic. The helical transmembrane segment at 23-43 (AIVTLVVLLVSIVVLVTLTLI) threads the bilayer. At 44–485 (QIRHPQVLPP…PLIHLPIQPP (442 aa)) the chain is on the extracellular side. Asparagine 81 is a glycosylation site (N-linked (GlcNAc...) asparagine). A disulfide bond links cysteine 92 and cysteine 116. An N-linked (GlcNAc...) asparagine glycan is attached at asparagine 149. Residue glutamate 182 is the Proton acceptor of the active site. 222 to 226 (GASTQ) contributes to the ATP binding site. N-linked (GlcNAc...) asparagine glycans are attached at residues asparagine 238, asparagine 284, and asparagine 318. 3 disulfides stabilise this stretch: cysteine 261–cysteine 308, cysteine 289–cysteine 334, and cysteine 347–cysteine 353. Asparagine 381 and asparagine 392 each carry an N-linked (GlcNAc...) asparagine glycan. An intrachain disulfide couples cysteine 399 to cysteine 422. Asparagine 454 is a glycosylation site (N-linked (GlcNAc...) asparagine). A helical membrane pass occupies residues 486-506 (VFMGVLAFFTAIALLCLAFLL). At 507 to 529 (YLCSSFRTKERSENAFDQAVDSD) the chain is on the cytoplasmic side.

The protein belongs to the GDA1/CD39 NTPase family. Ca(2+) serves as cofactor. Requires Mg(2+) as cofactor.

The protein localises to the cell membrane. The enzyme catalyses a ribonucleoside 5'-triphosphate + 2 H2O = a ribonucleoside 5'-phosphate + 2 phosphate + 2 H(+). In terms of biological role, catalyzes the hydrolysis of nucleoside triphosphates and diphosphates. Has a threefold preference for the hydrolysis of ATP and UTP over ADP and UDP. This chain is Ectonucleoside triphosphate diphosphohydrolase 3, found in Mus musculus (Mouse).